The sequence spans 317 residues: Probable deoxyhypusine synthase 1 (317 aa).

Lysine 285 serves as the catalytic Nucleophile.

Belongs to the deoxyhypusine synthase family. The cofactor is NAD(+).

It catalyses the reaction [eIF5A protein]-L-lysine + spermidine = [eIF5A protein]-deoxyhypusine + propane-1,3-diamine. The protein operates within protein modification; eIF5A hypusination. Functionally, catalyzes the NAD-dependent oxidative cleavage of spermidine and the subsequent transfer of the butylamine moiety of spermidine to the epsilon-amino group of a specific lysine residue of the eIF-5A precursor protein to form the intermediate deoxyhypusine residue. The polypeptide is Probable deoxyhypusine synthase 1 (dys1) (Methanosarcina acetivorans (strain ATCC 35395 / DSM 2834 / JCM 12185 / C2A)).